The following is a 203-amino-acid chain: Cutinase pbc1 (203 aa).

The first 18 residues, 1–18 (MKVTALGNTLTGFGQALA), serve as a signal peptide directing secretion. A disulfide bridge links C32 with C107. S118 serves as the catalytic Nucleophile. A disulfide bridge connects residues C166 and C173. Residue H170 is part of the active site. H183 (proton donor/acceptor) is an active-site residue.

Belongs to the cutinase family. The 2 disulfide bonds play a critical role in holding the catalytic residues in juxta-position; reduction of the disulfide bridges results in the complete inactivation of the enzyme.

The protein localises to the secreted. It carries out the reaction cutin + H2O = cutin monomers.. In terms of biological role, catalyzes the hydrolysis of complex carboxylic polyesters found in the cell wall of plants. Degrades cutin, a macromolecule that forms the structure of the plant cuticle. Allows pathogenic fungi to penetrate through the cuticular barrier into the host plant during the initial stage of fungal infection. This is Cutinase pbc1 from Pyrenopeziza brassicae.